We begin with the raw amino-acid sequence, 88 residues long: Phosphocarrier protein HPr (88 aa).

The 88-residue stretch at 1–88 (MEKKEFHIVA…ETLQKEGLAE (88 aa)) folds into the HPr domain. His15 functions as the Pros-phosphohistidine intermediate in the catalytic mechanism. Position 46 is a phosphoserine; by HPrK/P (Ser46).

Belongs to the HPr family. In terms of assembly, monomer.

The protein localises to the cytoplasm. Its activity is regulated as follows. Phosphorylation on Ser-46 inhibits the phosphoryl transfer from enzyme I to HPr. General (non sugar-specific) component of the phosphoenolpyruvate-dependent sugar phosphotransferase system (sugar PTS). This major carbohydrate active-transport system catalyzes the phosphorylation of incoming sugar substrates concomitantly with their translocation across the cell membrane. The phosphoryl group from phosphoenolpyruvate (PEP) is transferred to the phosphoryl carrier protein HPr by enzyme I. Phospho-HPr then transfers it to the PTS EIIA domain. Functionally, P-Ser-HPr interacts with the catabolite control protein A (CcpA), forming a complex that binds to DNA at the catabolite response elements cre, operator sites preceding a large number of catabolite-regulated genes. Thus, P-Ser-HPr is a corepressor in carbon catabolite repression (CCR), a mechanism that allows bacteria to coordinate and optimize the utilization of available carbon sources. P-Ser-HPr also plays a role in inducer exclusion, in which it probably interacts with several non-PTS permeases and inhibits their transport activity. The polypeptide is Phosphocarrier protein HPr (ptsH) (Enterococcus faecalis (strain ATCC 700802 / V583)).